We begin with the raw amino-acid sequence, 483 residues long: E3 ubiquitin-protein ligase TRIM50 (483 aa).

The RING-type zinc finger occupies 16–57 (CPICLEVFKEPLMLQCGHSYCKNCLDSLSEHLDSELRCPVCR). The B box-type zinc finger occupies 84–125 (TEPTVCVHHRNPLSLFCEKDQEFICGLCGLLGSHQHHRVTPV). Positions 89, 92, 111, and 117 each coordinate Zn(2+). Coiled coils occupy residues 127 to 169 (TVYS…NESD) and 203 to 236 (GLVASLDMQLEQAQGTQERLAQAERVLEQFGNES). Residues 275 to 474 (DIKLTVWKRL…LPMVLPPPSA (200 aa)) form the B30.2/SPRY domain. Lys372 is subject to N6-acetyllysine.

This sequence belongs to the TRIM/RBCC family. As to quaternary structure, can form dimers and trimers. Interacts with several E2 ubiquitin-conjugating enzymes, including UBE2L6, UBE2E1, UBE2E3. No interaction with UBE2H. Interacts with BECN1. Interacts with SQSTM1. Interacts with NLRP3. In terms of processing, auto-ubiquitinated. Post-translationally, acetylated by EP300 and KAT2B. HDAC6 drives TRIM50 deacetylation. Acetylation antagonizes with TRIM50 ubiquitination.

It is found in the cytoplasm. The enzyme catalyses S-ubiquitinyl-[E2 ubiquitin-conjugating enzyme]-L-cysteine + [acceptor protein]-L-lysine = [E2 ubiquitin-conjugating enzyme]-L-cysteine + N(6)-ubiquitinyl-[acceptor protein]-L-lysine.. Functionally, E3 ubiquitin-protein ligase that ubiquitinates Beclin-1/BECN1 in a 'Lys-63'-dependent manner enhancing its binding to ULK1. In turn, promotes starvation-induced autophagy activation. Also interacts with p62/SQSTM1 protein and thereby induces the formation and the autophagy clearance of aggresome-associated polyubiquitinated proteins through HDAC6 interaction. Also promotes NLRP3 inflammasome activation by directly inducing NLRP3 oligomerization independent of its E3 ligase function. This is E3 ubiquitin-protein ligase TRIM50 (Trim50) from Rattus norvegicus (Rat).